The sequence spans 573 residues: Isocitrate dehydrogenase kinase/phosphatase (573 aa).

ATP-binding positions include 317–323 (APGVRGM) and Lys-338. Residue Asp-373 is part of the active site.

It belongs to the AceK family.

It is found in the cytoplasm. It carries out the reaction L-seryl-[isocitrate dehydrogenase] + ATP = O-phospho-L-seryl-[isocitrate dehydrogenase] + ADP + H(+). Its function is as follows. Bifunctional enzyme which can phosphorylate or dephosphorylate isocitrate dehydrogenase (IDH) on a specific serine residue. This is a regulatory mechanism which enables bacteria to bypass the Krebs cycle via the glyoxylate shunt in response to the source of carbon. When bacteria are grown on glucose, IDH is fully active and unphosphorylated, but when grown on acetate or ethanol, the activity of IDH declines drastically concomitant with its phosphorylation. The sequence is that of Isocitrate dehydrogenase kinase/phosphatase from Pseudomonas fluorescens (strain Pf0-1).